The sequence spans 712 residues: Cyclomaltodextrin glucanotransferase (712 aa).

The signal sequence occupies residues Met-1–Ala-27. Residues Ala-28 to Pro-165 form an A1 region. Ca(2+)-binding residues include Asp-54, Asn-56, Asn-59, and Asn-60. A disulfide bridge connects residues Cys-70 and Cys-77. Ca(2+)-binding residues include Gly-78 and Asp-80. Tyr-127–Trp-128 is a binding site for substrate. Position 166 (Asn-166) interacts with Ca(2+). The segment at Asn-166–His-229 is b. His-167 is a binding site for substrate. Ile-217 provides a ligand contact to Ca(2+). Asn-220–Asp-223 is a substrate binding site. Asp-226 is a Ca(2+) binding site. The tract at residues Asn-230–Tyr-433 is A2. Arg-254 is a substrate binding site. The Nucleophile role is filled by Asp-256. Lys-259–His-260 contributes to the substrate binding site. Residue His-260 participates in Ca(2+) binding. Glu-284 acts as the Proton donor in catalysis. 3 residues coordinate substrate: His-354, Asp-398, and Arg-402. The segment at Gly-434 to Asp-522 is c. A d region spans residues Ala-523 to Leu-608. An IPT/TIG domain is found at Pro-526–Glu-606. A CBM20 domain is found at Val-607–Pro-712. Residues Thr-609 to Pro-712 are e.

It belongs to the glycosyl hydrolase 13 family. In terms of assembly, monomer. It depends on Ca(2+) as a cofactor.

It is found in the secreted. The enzyme catalyses Cyclizes part of a (1-&gt;4)-alpha-D-glucan chain by formation of a (1-&gt;4)-alpha-D-glucosidic bond.. The polypeptide is Cyclomaltodextrin glucanotransferase (cgt) (Bacillus sp. (strain 38-2)).